We begin with the raw amino-acid sequence, 2710 residues long: Serine/threonine-protein kinase ATR (2710 aa).

The FAT domain occupies 1647–2257 (TLAKASFRCQ…LWMMAAVSKS (611 aa)). One can recognise a PI3K/PI4K catalytic domain in the interval 2368–2680 (IADDAEILNS…GVNAAPSLPL (313 aa)). Residues 2374–2380 (ILNSLQK) are G-loop. The catalytic loop stretch occupies residues 2545–2553 (GLGDRHGEN). The tract at residues 2565-2589 (HVDFSCLFDKGLLLEKPEVVPFRFT) is activation loop. Residues 2678 to 2710 (LPLSVEGQARRLIAEAVSHSNLGKMYVWWMAWF) form the FATC domain.

Belongs to the PI3/PI4-kinase family. ATM subfamily.

The protein resides in the nucleus. It carries out the reaction L-seryl-[protein] + ATP = O-phospho-L-seryl-[protein] + ADP + H(+). The enzyme catalyses L-threonyl-[protein] + ATP = O-phospho-L-threonyl-[protein] + ADP + H(+). In terms of biological role, probable serine/threonine kinase. Seems to play a central role in cell-cycle regulation by transmitting DNA damage signals to downstream effectors of cell-cycle progression. May recognize the substrate consensus sequence [ST]-Q and phosphorylate histone variant H2AX to form H2AXS139ph at sites of DNA damage, thereby regulating DNA damage response mechanism. The sequence is that of Serine/threonine-protein kinase ATR from Oryza sativa subsp. japonica (Rice).